A 149-amino-acid chain; its full sequence is Deoxyuridine 5'-triphosphate nucleotidohydrolase (149 aa).

Substrate-binding positions include Arg68 to Gly70, Asn81, Leu85 to Asp87, and Met95.

The protein belongs to the dUTPase family. Mg(2+) is required as a cofactor.

The enzyme catalyses dUTP + H2O = dUMP + diphosphate + H(+). Its pathway is pyrimidine metabolism; dUMP biosynthesis; dUMP from dCTP (dUTP route): step 2/2. Functionally, this enzyme is involved in nucleotide metabolism: it produces dUMP, the immediate precursor of thymidine nucleotides and it decreases the intracellular concentration of dUTP so that uracil cannot be incorporated into DNA. In Methylibium petroleiphilum (strain ATCC BAA-1232 / LMG 22953 / PM1), this protein is Deoxyuridine 5'-triphosphate nucleotidohydrolase.